A 474-amino-acid chain; its full sequence is 15-cis-phytoene desaturase (474 aa).

Belongs to the carotenoid/retinoid oxidoreductase family.

The protein resides in the cell membrane. It carries out the reaction 2 a plastoquinone + 15-cis-phytoene = 9,9',15-tri-cis-zeta-carotene + 2 a plastoquinol. It participates in carotenoid biosynthesis; lycopene biosynthesis. Its activity is regulated as follows. Inhibited by the herbicide norflurazon in a non-competitive way. This enzyme converts phytoene into zeta-carotene via the intermediary of phytofluene by the symmetrical introduction of two double bonds at the C-11 and C-11' positions of phytoene. Also active with phytofluene and 1,2-epoxyphytoene as substrates. In Synechococcus elongatus (strain ATCC 33912 / PCC 7942 / FACHB-805) (Anacystis nidulans R2), this protein is 15-cis-phytoene desaturase (pds).